The sequence spans 328 residues: Probable GDP-L-fucose synthase 1 (328 aa).

25-31 (GHRGLVG) serves as a coordination point for NADP(+). Y152 (proton donor/acceptor) is an active-site residue. Residues K156, 179–182 (PTNL), and H195 contribute to the NADP(+) site. The substrate site is built by R203, W218, R225, and D285.

Belongs to the NAD(P)-dependent epimerase/dehydratase family. Fucose synthase subfamily. In terms of assembly, homodimer.

The enzyme catalyses GDP-beta-L-fucose + NADP(+) = GDP-4-dehydro-alpha-D-rhamnose + NADPH + H(+). It participates in nucleotide-sugar biosynthesis; GDP-L-fucose biosynthesis via de novo pathway; GDP-L-fucose from GDP-alpha-D-mannose: step 2/2. Functionally, catalyzes the two-step NADP-dependent conversion of GDP-4-dehydro-6-deoxy-D-mannose to GDP-fucose, involving an epimerase and a reductase reaction. This Oryza sativa subsp. japonica (Rice) protein is Probable GDP-L-fucose synthase 1.